Here is a 324-residue protein sequence, read N- to C-terminus: Glucosyl-3-phosphoglycerate synthase (324 aa).

Residues 50–54 (PALNE), S81, K114, and 134–135 (DS) contribute to the UDP-alpha-D-glucose site. D136 contributes to the Mn(2+) binding site. 184–187 (GRVT) contacts (2R)-3-phosphoglycerate. UDP-alpha-D-glucose contacts are provided by residues 229–232 (YGVE) and 256–261 (RAHRNR). Residue H258 participates in Mn(2+) binding. Residue N260 coordinates (2R)-3-phosphoglycerate.

The protein belongs to the glycosyltransferase 2 family. Homotrimer. Requires Mg(2+) as cofactor. The cofactor is Mn(2+).

It carries out the reaction an NDP-alpha-D-glucose + (2R)-3-phosphoglycerate = (2R)-2-O-(alpha-D-glucopyranosyl)-3-phospho-glycerate + a ribonucleoside 5'-diphosphate + H(+). It catalyses the reaction (2R)-3-phosphoglycerate + UDP-alpha-D-glucose = (2R)-2-O-(alpha-D-glucopyranosyl)-3-phospho-glycerate + UDP + H(+). The catalysed reaction is ADP-alpha-D-glucose + (2R)-3-phosphoglycerate = (2R)-2-O-(alpha-D-glucopyranosyl)-3-phospho-glycerate + ADP + H(+). The enzyme catalyses GDP-D-glucose + (2R)-3-phosphoglycerate = (2R)-2-O-(alpha-D-glucopyranosyl)-3-phospho-glycerate + GDP + H(+). In terms of biological role, involved in the biosynthesis of 6-O-methylglucose lipopolysaccarides (MGLPs). Catalyzes the transfer of the glucose moiety from a nuleotide sugar such as UDP-alpha-D-glucose to the position 2 of 3-phospho-D-glycerate (3-PGA) to form glucosyl-3-phosphoglycerate (GPG). It can use UDP-glucose, ADP-glucose and GDP-glucose as sugar donor substrates with decreasing affinity and with 3-PGA as an acceptor. D-glycerate can only be an acceptor with ADP-glucose and at a very low rate. The polypeptide is Glucosyl-3-phosphoglycerate synthase (gpgS) (Mycobacterium bovis (strain ATCC BAA-935 / AF2122/97)).